Here is a 305-residue protein sequence, read N- to C-terminus: MKIAIVGGPTAVGKTDIMIEVCEEIGAEIISMDSRQIYRYMDIGTAKPTSEQRRRVPHHMIDIIDPDEYYNAFMYRKDSLRAMEDVLRRGKIPVYVGGTGLYADALVRGIFEGVPADENIRKELRELERREPGILRKMLEEFDPEAATRIHPNDLKRTIRALEVYMKTGRRISELQKEAKGDDRFFIIVLTRERYELYERINKRVDKMIEMGLVDEVKRLLGMGYSKDLNSMKTIGYREVIDYLEGKYDFDKMVHLIKRNTRHFARRQIIWFKRYKEAVWYNLTFEDVGEVKEKLKKLIVENFSV.

8-15 (GPTAVGKT) is an ATP binding site. 10-15 (TAVGKT) is a substrate binding site. Positions 33–36 (DSRQ) are interaction with substrate tRNA.

The protein belongs to the IPP transferase family. In terms of assembly, monomer. Requires Mg(2+) as cofactor.

It carries out the reaction adenosine(37) in tRNA + dimethylallyl diphosphate = N(6)-dimethylallyladenosine(37) in tRNA + diphosphate. In terms of biological role, catalyzes the transfer of a dimethylallyl group onto the adenine at position 37 in tRNAs that read codons beginning with uridine, leading to the formation of N6-(dimethylallyl)adenosine (i(6)A). The chain is tRNA dimethylallyltransferase from Thermotoga petrophila (strain ATCC BAA-488 / DSM 13995 / JCM 10881 / RKU-1).